Here is a 244-residue protein sequence, read N- to C-terminus: 5-oxoprolinase subunit A (244 aa).

The protein belongs to the LamB/PxpA family. As to quaternary structure, forms a complex composed of PxpA, PxpB and PxpC.

It carries out the reaction 5-oxo-L-proline + ATP + 2 H2O = L-glutamate + ADP + phosphate + H(+). Its function is as follows. Catalyzes the cleavage of 5-oxoproline to form L-glutamate coupled to the hydrolysis of ATP to ADP and inorganic phosphate. The chain is 5-oxoprolinase subunit A from Salmonella agona (strain SL483).